The primary structure comprises 164 residues: Peptidyl-prolyl cis-trans isomerase A-like 4G (164 aa).

The PPIase cyclophilin-type domain maps to 7-163; that stretch reads FFDITVDGKP…KKITIADCGQ (157 aa).

This sequence belongs to the cyclophilin-type PPIase family. PPIase A subfamily.

Its subcellular location is the cytoplasm. The catalysed reaction is [protein]-peptidylproline (omega=180) = [protein]-peptidylproline (omega=0). In terms of biological role, PPIases accelerate the folding of proteins. It catalyzes the cis-trans isomerization of proline imidic peptide bonds in oligopeptides. This is Peptidyl-prolyl cis-trans isomerase A-like 4G (PPIAL4G) from Homo sapiens (Human).